The chain runs to 572 residues: MNLHQTVEHEAAAAFAAAGIAGSPVVLQPTKNAEHGDFQINGVMGAAKKAKQNPRELAQKVADALAGNAVIESAEVAGPGFINLRLRHEFLAQNIHAALNDARFGVAKTAQPQTVVIDYSSPNLAKEMHVGHLRSSIIGDSISRVLEFTGNTVIRQNHVGDWGTQFGMLVAYLVEQQKDNAAFELADLEQFYRAAKVRFDEDPAFADTAREYVVKLQGGDETVLALWKQFVDISLSHAQAVYDTLGLKLRPEDVAGESKYNDDLQPVADDLVQKGLAVEDDGAKVVFLDEFKNKEGEPAAFIVQKQGGGFLYASTDLACLRYRIGRLKAGRLLYVVDHRQALHFEQLFTTSRKAGYLPEDAKAEFIGFGTMMGKDGKPFKTRSGDTVKLVDLLTEAVERATALVKEKNPELGADEAAKIGKTVGIGAVKYADLSKNRTSDYVFDWDAMLSFEGNTAPYLQYAYTRVQSVFRKAGEWDATAPTVLTEPLEKQLAAELLKFENVLQSVADTAYPHYLAAYLYQAATLFSRFYEACPILKAEGASRNSRLQLAKLTGNTLKQGLDLLGIDVLDVM.

A 'HIGH' region motif is present at residues 122 to 132; that stretch reads PNLAKEMHVGH.

Belongs to the class-I aminoacyl-tRNA synthetase family. In terms of assembly, monomer.

It localises to the cytoplasm. The catalysed reaction is tRNA(Arg) + L-arginine + ATP = L-arginyl-tRNA(Arg) + AMP + diphosphate. In Neisseria gonorrhoeae (strain ATCC 700825 / FA 1090), this protein is Arginine--tRNA ligase.